The chain runs to 182 residues: Isopentenyl-diphosphate Delta-isomerase (182 aa).

Positions 25 and 32 each coordinate Mn(2+). Residue Cys67 is part of the active site. Residue His69 participates in Mn(2+) binding. Mg(2+) is bound at residue Glu87. The Mn(2+) site is built by Glu114 and Glu116. The active site involves Glu116.

The protein belongs to the IPP isomerase type 1 family. In terms of assembly, homodimer. Requires Mg(2+) as cofactor. Mn(2+) is required as a cofactor.

The protein resides in the cytoplasm. The enzyme catalyses isopentenyl diphosphate = dimethylallyl diphosphate. It participates in isoprenoid biosynthesis; dimethylallyl diphosphate biosynthesis; dimethylallyl diphosphate from isopentenyl diphosphate: step 1/1. Catalyzes the 1,3-allylic rearrangement of the homoallylic substrate isopentenyl (IPP) to its highly electrophilic allylic isomer, dimethylallyl diphosphate (DMAPP). This is Isopentenyl-diphosphate Delta-isomerase from Escherichia coli (strain K12 / MC4100 / BW2952).